The sequence spans 125 residues: S-adenosylmethionine decarboxylase proenzyme (125 aa).

Ser71 (schiff-base intermediate with substrate; via pyruvic acid) is an active-site residue. The residue at position 71 (Ser71) is a Pyruvic acid (Ser); by autocatalysis. His76 functions as the Proton acceptor; for processing activity in the catalytic mechanism. Residue Cys91 is the Proton donor; for catalytic activity of the active site.

Belongs to the prokaryotic AdoMetDC family. Type 1 subfamily. Heterotetramer of two alpha and two beta chains arranged as a dimer of alpha/beta heterodimers. The cofactor is pyruvate. Post-translationally, is synthesized initially as an inactive proenzyme. Formation of the active enzyme involves a self-maturation process in which the active site pyruvoyl group is generated from an internal serine residue via an autocatalytic post-translational modification. Two non-identical subunits are generated from the proenzyme in this reaction, and the pyruvate is formed at the N-terminus of the alpha chain, which is derived from the carboxyl end of the proenzyme. The post-translation cleavage follows an unusual pathway, termed non-hydrolytic serinolysis, in which the side chain hydroxyl group of the serine supplies its oxygen atom to form the C-terminus of the beta chain, while the remainder of the serine residue undergoes an oxidative deamination to produce ammonia and the pyruvoyl group blocking the N-terminus of the alpha chain.

The catalysed reaction is S-adenosyl-L-methionine + H(+) = S-adenosyl 3-(methylsulfanyl)propylamine + CO2. It functions in the pathway amine and polyamine biosynthesis; S-adenosylmethioninamine biosynthesis; S-adenosylmethioninamine from S-adenosyl-L-methionine: step 1/1. Catalyzes the decarboxylation of S-adenosylmethionine to S-adenosylmethioninamine (dcAdoMet), the propylamine donor required for the synthesis of the polyamines spermine and spermidine from the diamine putrescine. This is S-adenosylmethionine decarboxylase proenzyme from Pyrobaculum islandicum (strain DSM 4184 / JCM 9189 / GEO3).